The primary structure comprises 237 residues: Demethylmenaquinone methyltransferase (237 aa).

S-adenosyl-L-methionine contacts are provided by residues threonine 58, aspartate 79, and 107-108 (NA).

Belongs to the class I-like SAM-binding methyltransferase superfamily. MenG/UbiE family.

It catalyses the reaction a 2-demethylmenaquinol + S-adenosyl-L-methionine = a menaquinol + S-adenosyl-L-homocysteine + H(+). The protein operates within quinol/quinone metabolism; menaquinone biosynthesis; menaquinol from 1,4-dihydroxy-2-naphthoate: step 2/2. Functionally, methyltransferase required for the conversion of demethylmenaquinol (DMKH2) to menaquinol (MKH2). This Lactiplantibacillus plantarum (strain ATCC BAA-793 / NCIMB 8826 / WCFS1) (Lactobacillus plantarum) protein is Demethylmenaquinone methyltransferase.